Consider the following 60-residue polypeptide: Large ribosomal subunit protein bL33 (60 aa).

This sequence belongs to the bacterial ribosomal protein bL33 family.

The sequence is that of Large ribosomal subunit protein bL33 from Chlorobium chlorochromatii (strain CaD3).